Consider the following 226-residue polypeptide: MGITRNLILGLACLAFVSIAKALPHEPELGSARVVFQTSYGDIEFGFYPTVAPKTVDHIFKLVRLGGYNTNHFFRVDKGFVAQVADVASGRSAPMNEEQRKEAEKKIVGEFSDVKHVRGTLSMGRYDDPNSAQSSFSMLLGNAPHLDRQYAVFGKVTKGDETLSKLEEVPTRREGIFVMPTERITILSTYYYDTKMESCEEERSVLKRRLQASFVEVERQRMKCFP.

Residues 1–22 form the signal peptide; the sequence is MGITRNLILGLACLAFVSIAKA. Residues 34-191 form the PPIase cyclophilin-type domain; it reads VVFQTSYGDI…ERITILSTYY (158 aa).

Belongs to the cyclophilin-type PPIase family. In terms of tissue distribution, ubiquitous. Lower expression in roots.

It localises to the endoplasmic reticulum. The catalysed reaction is [protein]-peptidylproline (omega=180) = [protein]-peptidylproline (omega=0). In terms of biological role, PPIases accelerate the folding of proteins. It catalyzes the cis-trans isomerization of proline imidic peptide bonds in oligopeptides. The sequence is that of Peptidyl-prolyl cis-trans isomerase CYP23 (CYP23) from Arabidopsis thaliana (Mouse-ear cress).